The primary structure comprises 313 residues: Methionyl-tRNA formyltransferase (313 aa).

113 to 116 (SLLP) provides a ligand contact to (6S)-5,6,7,8-tetrahydrofolate.

It belongs to the Fmt family.

It catalyses the reaction L-methionyl-tRNA(fMet) + (6R)-10-formyltetrahydrofolate = N-formyl-L-methionyl-tRNA(fMet) + (6S)-5,6,7,8-tetrahydrofolate + H(+). In terms of biological role, attaches a formyl group to the free amino group of methionyl-tRNA(fMet). The formyl group appears to play a dual role in the initiator identity of N-formylmethionyl-tRNA by promoting its recognition by IF2 and preventing the misappropriation of this tRNA by the elongation apparatus. In Francisella tularensis subsp. holarctica (strain FTNF002-00 / FTA), this protein is Methionyl-tRNA formyltransferase.